A 296-amino-acid chain; its full sequence is Coatomer subunit epsilon (296 aa).

Belongs to the COPE family. In terms of assembly, oligomeric complex that consists of at least the alpha, beta, beta', gamma, delta, epsilon and zeta subunits. Interacts with the ESCRT-0 subunit VPS27.

The protein resides in the cytoplasm. Its subcellular location is the golgi apparatus membrane. It localises to the cytoplasmic vesicle. It is found in the COPI-coated vesicle membrane. The coatomer is a cytosolic protein complex that binds to dilysine motifs and reversibly associates with Golgi non-clathrin-coated vesicles, which further mediate biosynthetic protein transport from the ER, via the Golgi up to the trans Golgi network. The coatomer complex is required for budding from Golgi membranes, and is essential for the retrograde Golgi-to-ER transport of dilysine-tagged proteins. This Saccharomyces cerevisiae (strain ATCC 204508 / S288c) (Baker's yeast) protein is Coatomer subunit epsilon (SEC28).